The primary structure comprises 182 residues: Ribulose bisphosphate carboxylase small subunit, chloroplastic 6 (182 aa).

The transit peptide at Met-1–Arg-41 directs the protein to the chloroplast.

Belongs to the RuBisCO small chain family. In terms of assembly, heterohexadecamer of 8 large and 8 small subunits.

It localises to the plastid. It is found in the chloroplast. RuBisCO catalyzes two reactions: the carboxylation of D-ribulose 1,5-bisphosphate, the primary event in carbon dioxide fixation, as well as the oxidative fragmentation of the pentose substrate. Both reactions occur simultaneously and in competition at the same active site. Although the small subunit is not catalytic it is essential for maximal activity. This is Ribulose bisphosphate carboxylase small subunit, chloroplastic 6 from Acetabularia peniculus (Green alga).